The sequence spans 143 residues: Transmembrane protein 80 (143 aa).

Transmembrane regions (helical) follow at residues 22–42, 47–67, 88–108, and 122–142; these read LLCLSGTYYALYFLATLLLLV, VFTYPHSCLVLDLTLLFLMGI, LAASLVLTVGSALLSAYFLLW, and PLLALHGLEAVLQVVAIAAFV.

The protein resides in the membrane. The protein localises to the cell projection. It localises to the cilium. This Bos taurus (Bovine) protein is Transmembrane protein 80 (TMEM80).